Consider the following 422-residue polypeptide: Phosphoribosylamine--glycine ligase (422 aa).

An ATP-grasp domain is found at 107 to 314 (KAFMQRHGIP…LFDVLDRAID (208 aa)). 133 to 194 (VDREGAPIVI…EEFLAGEEAS (62 aa)) provides a ligand contact to ATP. Residues Glu284 and Asn286 each coordinate Mg(2+).

The protein belongs to the GARS family. Mg(2+) serves as cofactor. Requires Mn(2+) as cofactor.

The catalysed reaction is 5-phospho-beta-D-ribosylamine + glycine + ATP = N(1)-(5-phospho-beta-D-ribosyl)glycinamide + ADP + phosphate + H(+). The protein operates within purine metabolism; IMP biosynthesis via de novo pathway; N(1)-(5-phospho-D-ribosyl)glycinamide from 5-phospho-alpha-D-ribose 1-diphosphate: step 2/2. In Ralstonia nicotianae (strain ATCC BAA-1114 / GMI1000) (Ralstonia solanacearum), this protein is Phosphoribosylamine--glycine ligase.